The following is a 36-amino-acid chain: Potassium channel toxin alpha-KTx 16.9 (36 aa).

3 cysteine pairs are disulfide-bonded: Cys-7-Cys-28, Cys-13-Cys-33, and Cys-17-Cys-35.

Belongs to the short scorpion toxin superfamily. Potassium channel inhibitor family. Alpha-KTx 16 subfamily. As to expression, expressed by the venom gland.

The protein localises to the secreted. In terms of biological role, poorly competes with (125)I-kaliotoxin binding on rat brain synaptosome (IC(50)&gt;100 nM). Is a poor Kv1.3/KCNA3 ligand. May have as real target KCa1.1/KCNMA1 channel. Shows weak toxicity on mice. This chain is Potassium channel toxin alpha-KTx 16.9, found in Buthus paris (Scorpion).